The sequence spans 473 residues: Protein translocase subunit SecA (473 aa).

Asp-127 provides a ligand contact to ATP. Residues 424 to 447 form a disordered region; it reads VAEGKAVHQDTSKQEPKKKQPIRK. Positions 457, 459, 468, and 469 each coordinate Zn(2+).

It belongs to the SecA family. As to quaternary structure, monomer and homodimer. Part of the essential Sec protein translocation apparatus which comprises SecA, SecYEG and auxiliary proteins SecDF. Other proteins may also be involved. Requires Zn(2+) as cofactor.

It is found in the cell membrane. The protein resides in the cytoplasm. The enzyme catalyses ATP + H2O + cellular proteinSide 1 = ADP + phosphate + cellular proteinSide 2.. In terms of biological role, part of the Sec protein translocase complex. Interacts with the SecYEG preprotein conducting channel. Has a central role in coupling the hydrolysis of ATP to the transfer of proteins into and across the cell membrane, serving as an ATP-driven molecular motor driving the stepwise translocation of polypeptide chains across the membrane. In Cytobacillus firmus (Bacillus firmus), this protein is Protein translocase subunit SecA.